Reading from the N-terminus, the 98-residue chain is NADH-ubiquinone oxidoreductase chain 4L (98 aa).

Helical transmembrane passes span 1–21 (MSMVYINIFLAFIMSLMGLLM), 29–49 (SLLCLEGMMLSLFIMMAVAIL), and 61–81 (IILLVFAACEAALGLSLLVMV).

The protein belongs to the complex I subunit 4L family. As to quaternary structure, core subunit of respiratory chain NADH dehydrogenase (Complex I) which is composed of 45 different subunits.

Its subcellular location is the mitochondrion inner membrane. It catalyses the reaction a ubiquinone + NADH + 5 H(+)(in) = a ubiquinol + NAD(+) + 4 H(+)(out). Its function is as follows. Core subunit of the mitochondrial membrane respiratory chain NADH dehydrogenase (Complex I) which catalyzes electron transfer from NADH through the respiratory chain, using ubiquinone as an electron acceptor. Part of the enzyme membrane arm which is embedded in the lipid bilayer and involved in proton translocation. The polypeptide is NADH-ubiquinone oxidoreductase chain 4L (MT-ND4L) (Felis catus (Cat)).